We begin with the raw amino-acid sequence, 397 residues long: 2,3,4,5-tetrahydropyridine-2,6-dicarboxylate N-succinyltransferase (397 aa).

The Acyl-anhydride intermediate role is filled by Glu265. Residues Arg267, Gly282, Ser285, Ala308, 323–324 (DA), Gly331, Lys360, and 373–376 (RQNS) contribute to the succinyl-CoA site.

Belongs to the type 2 tetrahydrodipicolinate N-succinyltransferase family. As to quaternary structure, homotrimer.

It localises to the cytoplasm. The enzyme catalyses (S)-2,3,4,5-tetrahydrodipicolinate + succinyl-CoA + H2O = (S)-2-succinylamino-6-oxoheptanedioate + CoA. It participates in amino-acid biosynthesis; L-lysine biosynthesis via DAP pathway; LL-2,6-diaminopimelate from (S)-tetrahydrodipicolinate (succinylase route): step 1/3. Functionally, catalyzes the conversion of the cyclic tetrahydrodipicolinate (THDP) into the acyclic N-succinyl-L-2-amino-6-oxopimelate using succinyl-CoA. This Sulfurovum sp. (strain NBC37-1) protein is 2,3,4,5-tetrahydropyridine-2,6-dicarboxylate N-succinyltransferase.